Consider the following 154-residue polypeptide: Troponin C, isoallergen Bla g 6.0301 (154 aa).

EF-hand domains lie at 11-46 (EQIS…MGQP), 47-82 (FNRR…FIIE), 87-122 (AMEK…LDEQ), and 123-154 (LTSD…MMTG). Ca(2+)-binding residues include Asp60, Asp62, Ser64, Arg66, and Glu71. Asp136, Asp138, Ser140, Thr142, and Glu147 together coordinate Ca(2+).

This sequence belongs to the troponin C family.

Functionally, troponin is the central regulatory protein of striated muscle contraction. It consists of three components: Troponin-I (Tn-I) which is the inhibitor of actomyosin ATPase, Troponin-T (Tn-T) which contains the binding site for tropomyosin and Troponin-C (Tn-C). The binding of calcium to Tn-C abolishes the inhibitory action of Tn on actin filaments. The sequence is that of Troponin C, isoallergen Bla g 6.0301 from Blattella germanica (German cockroach).